We begin with the raw amino-acid sequence, 305 residues long: Oxygen-dependent coproporphyrinogen-III oxidase (305 aa).

Ser99 lines the substrate pocket. Positions 103 and 113 each coordinate a divalent metal cation. His113 functions as the Proton donor in the catalytic mechanism. Residue 115-117 coordinates substrate; that stretch reads NVR. A divalent metal cation is bound by residues His152 and His182. The important for dimerization stretch occupies residues 247 to 282; the sequence is YVEFNLVLDRGTLFGLQTGGRTESILMSMPPLARWE. Substrate is bound at residue 265–267; sequence GGR.

It belongs to the aerobic coproporphyrinogen-III oxidase family. In terms of assembly, homodimer. The cofactor is a divalent metal cation.

Its subcellular location is the cytoplasm. It carries out the reaction coproporphyrinogen III + O2 + 2 H(+) = protoporphyrinogen IX + 2 CO2 + 2 H2O. The protein operates within porphyrin-containing compound metabolism; protoporphyrin-IX biosynthesis; protoporphyrinogen-IX from coproporphyrinogen-III (O2 route): step 1/1. Its function is as follows. Involved in the heme biosynthesis. Catalyzes the aerobic oxidative decarboxylation of propionate groups of rings A and B of coproporphyrinogen-III to yield the vinyl groups in protoporphyrinogen-IX. In Vibrio cholerae serotype O1 (strain M66-2), this protein is Oxygen-dependent coproporphyrinogen-III oxidase.